The sequence spans 244 residues: Carboxy-S-adenosyl-L-methionine synthase (244 aa).

S-adenosyl-L-methionine-binding positions include Y41, 66–68 (GCS), 91–92 (DN), N134, and R201.

This sequence belongs to the class I-like SAM-binding methyltransferase superfamily. Cx-SAM synthase family. Homodimer.

It carries out the reaction prephenate + S-adenosyl-L-methionine = carboxy-S-adenosyl-L-methionine + 3-phenylpyruvate + H2O. In terms of biological role, catalyzes the conversion of S-adenosyl-L-methionine (SAM) to carboxy-S-adenosyl-L-methionine (Cx-SAM). The protein is Carboxy-S-adenosyl-L-methionine synthase of Colwellia psychrerythraea (strain 34H / ATCC BAA-681) (Vibrio psychroerythus).